The following is a 394-amino-acid chain: Gastricsin (394 aa).

Positions 1–16 (MKWMVVVLLCLPLLEA) are cleaved as a signal peptide. The propeptide at 17-65 (TQIKVPLKKIKSIREVLREKGLLGDFLKNHKPQHARKFFRNRLAKTGDF) is activation peptide. The Peptidase A1 domain maps to 79-391 (YFGQISLGTP…DLANNRVGFA (313 aa)). Residue Asp-97 is part of the active site. 2 disulfides stabilise this stretch: Cys-110/Cys-115 and Cys-273/Cys-277. Thr-283 is an active-site residue. A disulfide bond links Cys-316 and Cys-349.

Belongs to the peptidase A1 family.

Its subcellular location is the secreted. It carries out the reaction More restricted specificity than pepsin A, but shows preferential cleavage at Tyr-|-Xaa bonds. High activity on hemoglobin.. In terms of biological role, hydrolyzes a variety of proteins. In Cavia porcellus (Guinea pig), this protein is Gastricsin (PGC).